A 287-amino-acid polypeptide reads, in one-letter code: tRNA pseudouridine synthase B (287 aa).

Aspartate 37 acts as the Nucleophile in catalysis.

It belongs to the pseudouridine synthase TruB family. Type 1 subfamily.

The catalysed reaction is uridine(55) in tRNA = pseudouridine(55) in tRNA. In terms of biological role, responsible for synthesis of pseudouridine from uracil-55 in the psi GC loop of transfer RNAs. The chain is tRNA pseudouridine synthase B from Caldicellulosiruptor saccharolyticus (strain ATCC 43494 / DSM 8903 / Tp8T 6331).